We begin with the raw amino-acid sequence, 191 residues long: Syndecan-2-A (191 aa).

The N-terminal stretch at 1–22 is a signal peptide; sequence MRNVWLIVPFALLAALSGETWA. Topologically, residues 23 to 137 are extracellular; the sequence is QADRDLYIDS…NLFHRTEVLA (115 aa). The tract at residues 32 to 60 is disordered; sequence STESSGNYPVDDDDYSSGSGSGIPARGDD. Ser36, Ser48, Ser50, and Ser52 each carry an O-linked (Xyl...) (glycosaminoglycan) serine glycan. The helical transmembrane segment at 138-158 threads the bilayer; sequence AVIAGGGIGFLFAVFLILLLV. Residues 159–191 lie on the Cytoplasmic side of the membrane; that stretch reads YRMRKKDEGSYDLGERKPSSAVYQKAPTKEFYA. The segment at 168-191 is disordered; it reads SYDLGERKPSSAVYQKAPTKEFYA.

This sequence belongs to the syndecan proteoglycan family. O-glycosylated; contains both heparan sulfate and chondroitin sulfate.

The protein resides in the membrane. Its function is as follows. Cell surface proteoglycan. The protein is Syndecan-2-A (sdc2-a) of Xenopus laevis (African clawed frog).